The following is a 231-amino-acid chain: uncharacterized protein (231 aa).

This sequence belongs to the DnaA family. HdA subfamily.

This is an uncharacterized protein from Haemophilus influenzae (strain ATCC 51907 / DSM 11121 / KW20 / Rd).